Here is a 468-residue protein sequence, read N- to C-terminus: UDP-N-acetylmuramoyl-L-alanine--L-glutamate ligase (468 aa).

Residue 122 to 128 (GTKGKST) coordinates ATP.

It belongs to the MurCDEF family. MurD2 subfamily.

The protein resides in the cytoplasm. The catalysed reaction is UDP-N-acetyl-alpha-D-muramoyl-L-alanine + L-glutamate + ATP = UDP-N-acetyl-alpha-D-muramoyl-L-alanyl-L-glutamate + ADP + phosphate + H(+). Its pathway is cell wall biogenesis; peptidoglycan biosynthesis. Cell wall formation. Catalyzes the addition of L-glutamate to the nucleotide precursor UDP-N-acetylmuramoyl-L-alanine. This chain is UDP-N-acetylmuramoyl-L-alanine--L-glutamate ligase, found in Xanthomonas campestris pv. campestris (strain 8004).